Reading from the N-terminus, the 454-residue chain is UDP-N-acetylmuramoylalanine--D-glutamate ligase (454 aa).

117–123 (GTNGKTT) provides a ligand contact to ATP.

It belongs to the MurCDEF family.

It is found in the cytoplasm. It carries out the reaction UDP-N-acetyl-alpha-D-muramoyl-L-alanine + D-glutamate + ATP = UDP-N-acetyl-alpha-D-muramoyl-L-alanyl-D-glutamate + ADP + phosphate + H(+). It participates in cell wall biogenesis; peptidoglycan biosynthesis. Functionally, cell wall formation. Catalyzes the addition of glutamate to the nucleotide precursor UDP-N-acetylmuramoyl-L-alanine (UMA). In Alkaliphilus oremlandii (strain OhILAs) (Clostridium oremlandii (strain OhILAs)), this protein is UDP-N-acetylmuramoylalanine--D-glutamate ligase.